The following is a 346-amino-acid chain: Iron uptake protein A2 (346 aa).

A signal peptide (tat-type signal) is located at residues 1 to 31 (MTTKISRRTFFVGGTALTALVVANLPRRASA). Residues His-43, Tyr-44, Tyr-169, Tyr-225, and Tyr-226 each contribute to the Fe cation site.

The protein belongs to the bacterial solute-binding protein 1 family. Post-translationally, predicted to be exported by the Tat system. The position of the signal peptide cleavage has not been experimentally proven.

It localises to the cellular thylakoid membrane. Its subcellular location is the periplasm. Probably part of a periplasmic ABC transporter complex futA1A2BC (TC 3.A.1.10.2) involved in Fe(3+) ion import (ferric iron). This protein and futA1 (slr1295) are subunit proteins that have redundant or overlapping substrate-binding functions. The differing subcellular locations of futA1 (predominantly thylakoid lumen) and futA2 (predominantly periplasmic) suggest they may fulfill different roles. Functionally, plays an important role in protecting the acceptor side of photosystem II (PSII) against oxidative damage, especially under iron-limiting growth conditions. Its function is as follows. Plays an undefined role in copper supply to thylakoid proteins. In Synechocystis sp. (strain ATCC 27184 / PCC 6803 / Kazusa), this protein is Iron uptake protein A2 (futA2).